The following is a 453-amino-acid chain: Glutamyl-tRNA(Gln) amidotransferase subunit A (453 aa).

Residues Lys-56 and Ser-131 each act as charge relay system in the active site. Ser-155 serves as the catalytic Acyl-ester intermediate.

It belongs to the amidase family. GatA subfamily. Heterotrimer of A, B and C subunits.

It catalyses the reaction L-glutamyl-tRNA(Gln) + L-glutamine + ATP + H2O = L-glutaminyl-tRNA(Gln) + L-glutamate + ADP + phosphate + H(+). Its function is as follows. Allows the formation of correctly charged Gln-tRNA(Gln) through the transamidation of misacylated Glu-tRNA(Gln) in organisms which lack glutaminyl-tRNA synthetase. The reaction takes place in the presence of glutamine and ATP through an activated gamma-phospho-Glu-tRNA(Gln). The polypeptide is Glutamyl-tRNA(Gln) amidotransferase subunit A (Campylobacter fetus subsp. fetus (strain 82-40)).